The sequence spans 358 residues: Photosystem II protein D1 2 (358 aa).

Helical transmembrane passes span Y28–I45, H117–L132, and W141–V155. H117 is a binding site for chlorophyll a. Position 125 (Y125) interacts with pheophytin a. The [CaMn4O5] cluster site is built by D169 and E188. A helical transmembrane segment spans residues F196–L217. H197 is a binding site for chlorophyll a. A quinone is bound by residues H214 and S263–F264. A Fe cation-binding site is contributed by H214. A Fe cation-binding site is contributed by H271. A helical transmembrane segment spans residues F273–M287. Residues H331, E332, D341, and A343 each coordinate [CaMn4O5] cluster. A propeptide spanning residues T344–G358 is cleaved from the precursor.

It belongs to the reaction center PufL/M/PsbA/D family. In terms of assembly, PSII is composed of 1 copy each of membrane proteins PsbA, PsbB, PsbC, PsbD, PsbE, PsbF, PsbH, PsbI, PsbJ, PsbK, PsbL, PsbM, PsbT, PsbX, PsbY, PsbZ, Psb30/Ycf12, peripheral proteins PsbO, CyanoQ (PsbQ), PsbU, PsbV and a large number of cofactors. It forms dimeric complexes. The D1/D2 heterodimer binds P680, chlorophylls that are the primary electron donor of PSII, and subsequent electron acceptors. It shares a non-heme iron and each subunit binds pheophytin, quinone, additional chlorophylls, carotenoids and lipids. D1 provides most of the ligands for the Mn4-Ca-O5 cluster of the oxygen-evolving complex (OEC). There is also a Cl(-1) ion associated with D1 and D2, which is required for oxygen evolution. The PSII complex binds additional chlorophylls, carotenoids and specific lipids. is required as a cofactor. Post-translationally, tyr-160 forms a radical intermediate that is referred to as redox-active TyrZ, YZ or Y-Z. In terms of processing, C-terminally processed by CtpA; processing is essential to allow assembly of the oxygen-evolving complex and thus photosynthetic growth.

The protein localises to the cellular thylakoid membrane. It carries out the reaction 2 a plastoquinone + 4 hnu + 2 H2O = 2 a plastoquinol + O2. Its function is as follows. Photosystem II (PSII) is a light-driven water:plastoquinone oxidoreductase that uses light energy to abstract electrons from H(2)O, generating O(2) and a proton gradient subsequently used for ATP formation. It consists of a core antenna complex that captures photons, and an electron transfer chain that converts photonic excitation into a charge separation. The D1/D2 (PsbA/PsbD) reaction center heterodimer binds P680, the primary electron donor of PSII as well as several subsequent electron acceptors. In Synechococcus sp. (strain RCC307), this protein is Photosystem II protein D1 2.